A 191-amino-acid polypeptide reads, in one-letter code: MSGGGTETPTGCEAPSGGGGGGGRKRDSLGTTSSPAHLIIKDLGEIHSRLLDHRPVIQGETRYFVKEFEEKRGLREMRALENLKNMIHETNEHTLPTCTETMEDSLSHVLQRLQAATASVCRLQQREQERKKVHNDHLIASEKQHIMQWEDFMKEQHSKQADVDEEHRKAMEKLKEQYAEMEKDLAKFSTF.

The segment at M1 to T32 is disordered. Position 2 is an N-acetylserine (S2). Residues Q160–F191 are a coiled coil.

It belongs to the BLOC1S5 family. In terms of assembly, component of the biogenesis of lysosome-related organelles complex 1 (BLOC-1) composed of BLOC1S1, BLOC1S2, BLOC1S3, BLOC1S4, BLOC1S5, BLOC1S6, DTNBP1/BLOC1S7 and SNAPIN/BLOC1S8. Octamer composed of one copy each BLOC1S1, BLOC1S2, BLOC1S3, BLOC1S4, BLOC1S5, BLOC1S6, DTNBP1/BLOC1S7 and SNAPIN/BLOC1S8. The BLOC-1 complex associates with the AP-3 protein complex and membrane protein cargos. Interacts with BLOC1S4, BLOC1S6, DTNBP1/BLOC1S7 and PI4K2A.

Component of the BLOC-1 complex, a complex that is required for normal biogenesis of lysosome-related organelles (LRO), such as platelet dense granules and melanosomes. In concert with the AP-3 complex, the BLOC-1 complex is required to target membrane protein cargos into vesicles assembled at cell bodies for delivery into neurites and nerve terminals. The BLOC-1 complex, in association with SNARE proteins, is also proposed to be involved in neurite extension. Plays a role in intracellular vesicle trafficking. This chain is Biogenesis of lysosome-related organelles complex 1 subunit 5 (BLOC1S5), found in Sus scrofa (Pig).